The primary structure comprises 394 residues: Elongation factor Tu-A (394 aa).

Positions 10–204 constitute a tr-type G domain; sequence KPHVNVGTIG…HLDTYIPEPQ (195 aa). A G1 region spans residues 19-26; that stretch reads GHVDHGKT. A GTP-binding site is contributed by 19–26; that stretch reads GHVDHGKT. Thr26 provides a ligand contact to Mg(2+). The G2 stretch occupies residues 60–64; that stretch reads GITIN. The G3 stretch occupies residues 81–84; it reads DCPG. GTP is bound by residues 81-85 and 136-139; these read DCPGH and NKCD. The G4 stretch occupies residues 136–139; it reads NKCD. The segment at 174-176 is G5; that stretch reads SAL.

It belongs to the TRAFAC class translation factor GTPase superfamily. Classic translation factor GTPase family. EF-Tu/EF-1A subfamily. In terms of assembly, monomer.

Its subcellular location is the cytoplasm. The catalysed reaction is GTP + H2O = GDP + phosphate + H(+). Functionally, GTP hydrolase that promotes the GTP-dependent binding of aminoacyl-tRNA to the A-site of ribosomes during protein biosynthesis. The chain is Elongation factor Tu-A from Pasteurella multocida (strain Pm70).